The chain runs to 349 residues: MNRKETRKVKVGNIYVGGDFRVSIQSMTNTDTKDVESTVKQIKELQEAGCDIVRCAVLDMDAACAIKDIVAKINIPLVADIHFDYRLALKAIENGVSAIRINPGNIGSREKVEAVVKACKEKNIPIRIGVNSGSLSKELLTKYGKPTPDALVESALEHVKILEELDFHDIVISMKSSNVETMIESYRIASQKTNYPLHLGVTEAGTPWRGTIKSAIGIGTLLAEGIGDTIRVSLTGDPVEEIKVGKEILKNFGYVKEGIEFISCPTCGRTQIDLINIAKEVEERLSSCKKNIKVAVMGCVVNGPGEAREADIGIAGGKGEGLIFRKGEIIKKVKEEDLVEELIKIIETI.

The [4Fe-4S] cluster site is built by Cys264, Cys267, Cys299, and Glu306.

It belongs to the IspG family. [4Fe-4S] cluster serves as cofactor.

The enzyme catalyses (2E)-4-hydroxy-3-methylbut-2-enyl diphosphate + oxidized [flavodoxin] + H2O + 2 H(+) = 2-C-methyl-D-erythritol 2,4-cyclic diphosphate + reduced [flavodoxin]. It participates in isoprenoid biosynthesis; isopentenyl diphosphate biosynthesis via DXP pathway; isopentenyl diphosphate from 1-deoxy-D-xylulose 5-phosphate: step 5/6. Its function is as follows. Converts 2C-methyl-D-erythritol 2,4-cyclodiphosphate (ME-2,4cPP) into 1-hydroxy-2-methyl-2-(E)-butenyl 4-diphosphate. The chain is 4-hydroxy-3-methylbut-2-en-1-yl diphosphate synthase (flavodoxin) from Clostridium perfringens (strain 13 / Type A).